A 201-amino-acid polypeptide reads, in one-letter code: Glutathione S-transferase (201 aa).

Positions 1 to 81 (MKLYYKVGAC…YIGDHSDVAA (81 aa)) constitute a GST N-terminal domain. Residues Cys-10, Lys-35, Val-52, 65–66 (QN), and 102–105 (SDLH) contribute to the glutathione site. One can recognise a GST C-terminal domain in the interval 87 to 201 (GSIERARLQE…QKAFKEEGLN (115 aa)).

The protein belongs to the GST superfamily. Beta family. As to quaternary structure, homodimer.

It is found in the cytoplasm. The enzyme catalyses RX + glutathione = an S-substituted glutathione + a halide anion + H(+). Conjugation of reduced glutathione to a wide number of exogenous and endogenous hydrophobic electrophiles. The protein is Glutathione S-transferase (gst) of Brucella anthropi (Ochrobactrum anthropi).